The chain runs to 355 residues: S-adenosylmethionine:tRNA ribosyltransferase-isomerase (355 aa).

This sequence belongs to the QueA family. In terms of assembly, monomer.

The protein resides in the cytoplasm. The catalysed reaction is 7-aminomethyl-7-carbaguanosine(34) in tRNA + S-adenosyl-L-methionine = epoxyqueuosine(34) in tRNA + adenine + L-methionine + 2 H(+). It functions in the pathway tRNA modification; tRNA-queuosine biosynthesis. Its function is as follows. Transfers and isomerizes the ribose moiety from AdoMet to the 7-aminomethyl group of 7-deazaguanine (preQ1-tRNA) to give epoxyqueuosine (oQ-tRNA). This is S-adenosylmethionine:tRNA ribosyltransferase-isomerase from Jannaschia sp. (strain CCS1).